The chain runs to 309 residues: Ribose-phosphate pyrophosphokinase (309 aa).

ATP contacts are provided by residues 37 to 39 (DGE) and 96 to 97 (RQ). Residues histidine 130 and aspartate 169 each coordinate Mg(2+). Residue lysine 192 is part of the active site. Residues arginine 194, aspartate 218, and 222–226 (DTAGT) contribute to the D-ribose 5-phosphate site.

This sequence belongs to the ribose-phosphate pyrophosphokinase family. Class I subfamily. As to quaternary structure, homohexamer. Mg(2+) serves as cofactor.

The protein resides in the cytoplasm. The enzyme catalyses D-ribose 5-phosphate + ATP = 5-phospho-alpha-D-ribose 1-diphosphate + AMP + H(+). It participates in metabolic intermediate biosynthesis; 5-phospho-alpha-D-ribose 1-diphosphate biosynthesis; 5-phospho-alpha-D-ribose 1-diphosphate from D-ribose 5-phosphate (route I): step 1/1. Functionally, involved in the biosynthesis of the central metabolite phospho-alpha-D-ribosyl-1-pyrophosphate (PRPP) via the transfer of pyrophosphoryl group from ATP to 1-hydroxyl of ribose-5-phosphate (Rib-5-P). The protein is Ribose-phosphate pyrophosphokinase of Helicobacter hepaticus (strain ATCC 51449 / 3B1).